The chain runs to 98 residues: Large ribosomal subunit protein uL23 (98 aa).

This sequence belongs to the universal ribosomal protein uL23 family. In terms of assembly, part of the 50S ribosomal subunit. Contacts protein L29, and trigger factor when it is bound to the ribosome.

In terms of biological role, one of the early assembly proteins it binds 23S rRNA. One of the proteins that surrounds the polypeptide exit tunnel on the outside of the ribosome. Forms the main docking site for trigger factor binding to the ribosome. The chain is Large ribosomal subunit protein uL23 from Bordetella avium (strain 197N).